We begin with the raw amino-acid sequence, 125 residues long: Ribosome-binding factor A (125 aa).

This sequence belongs to the RbfA family. In terms of assembly, monomer. Binds 30S ribosomal subunits, but not 50S ribosomal subunits or 70S ribosomes.

It is found in the cytoplasm. One of several proteins that assist in the late maturation steps of the functional core of the 30S ribosomal subunit. Associates with free 30S ribosomal subunits (but not with 30S subunits that are part of 70S ribosomes or polysomes). Required for efficient processing of 16S rRNA. May interact with the 5'-terminal helix region of 16S rRNA. This is Ribosome-binding factor A from Xylella fastidiosa (strain 9a5c).